A 102-amino-acid chain; its full sequence is uncharacterized protein (102 aa).

2 helical membrane passes run 21-43 (FSSSALVGIAPLTAYSALVTPVF) and 58-80 (SFAVNTPFKSCWCVIVMCSYFFC).

Its subcellular location is the membrane. This is an uncharacterized protein from Saccharomyces cerevisiae (strain ATCC 204508 / S288c) (Baker's yeast).